A 422-amino-acid polypeptide reads, in one-letter code: Protein FAM53B (422 aa).

Ser119, Ser168, Ser170, Ser180, Ser213, and Ser269 each carry phosphoserine. Disordered stretches follow at residues 193–225 (GQPCQGAPGSAPCGQAGDSWSPDPHPVGGGRLD) and 243–269 (CPPSANSTPASTPELARRSSGLARSRS). The span at 244-269 (PPSANSTPASTPELARRSSGLARSRS) shows a compositional bias: low complexity. The short motif at 282 to 285 (KRRR) is the Nuclear localization signal element. 2 positions are modified to phosphoserine: Ser335 and Ser344.

This sequence belongs to the FAM53 family. As to quaternary structure, interacts with CTNNB1.

The protein localises to the nucleus. Functionally, acts as a regulator of Wnt signaling pathway by regulating beta-catenin (CTNNB1) nuclear localization. The sequence is that of Protein FAM53B from Mus musculus (Mouse).